The chain runs to 459 residues: Autophagy-related protein 18 (459 aa).

WD repeat units lie at residues 1–39 (MTSPALNFITFNQDHSCLAVGTSKGFRIYHTDPFSRIFS) and 188–228 (AHRS…KLYQ). Positions 229–232 (FRRG) are necessary for proper localization to vacuole membrane. The short motif at 229–233 (FRRGT) is the L/FRRG motif element. One copy of the WD 3 repeat lies at 233-272 (TYPSTIYSMSFNLSSTLLCVSSTSDTIHIFRLGAPPGNTT). A disordered region spans residues 264–339 (LGAPPGNTTP…RGSGSFSSML (76 aa)). A compositionally biased stretch (low complexity) spans 265 to 277 (GAPPGNTTPAGAP). The span at 285-296 (RQDRWSRARSYD) shows a compositional bias: basic and acidic residues. Over residues 319-330 (PGAGNNQGGHTR) the composition is skewed to gly residues. A WD 4 repeat occupies 393 to 433 (APGGPLRSVVAMSSSSPQVMVVTSDGGFYVYNIDMEHGGEG).

This sequence belongs to the WD repeat PROPPIN family. Component of the PI(3,5)P2 regulatory complex. Interacts with ATG2 and ATG9. The ATG2-ATG18 complex is essential for autophagosome formation.

The protein localises to the preautophagosomal structure membrane. Its subcellular location is the vacuole membrane. It localises to the endosome membrane. Functionally, component of the PI(3,5)P2 regulatory complex that regulates both the synthesis and turnover of phosphatidylinositol 3,5-bisphosphate (PtdIns(3,5)P2). Plays an important role in osmotically-induced vacuole fragmentation. Required for cytoplasm to vacuole transport (Cvt) vesicle formation, pexophagy and starvation-induced autophagy. Involved in correct ATG9 trafficking to the pre-autophagosomal structure. With ATG2, protects ATG8 from ATG4-mediated cleavage. Autophagy is required for proper vegetative growth, asexual/sexual reproduction, and full virulence. Autophagy is particularly involved in the biosynthesis of deoxynivalenol (DON), an important virulence determinant. This chain is Autophagy-related protein 18, found in Gibberella zeae (strain ATCC MYA-4620 / CBS 123657 / FGSC 9075 / NRRL 31084 / PH-1) (Wheat head blight fungus).